The primary structure comprises 332 residues: Ribonucleoside-diphosphate reductase small chain C (332 aa).

Fe cation contacts are provided by D76, E107, and H110. The active site involves Y114. Fe cation-binding residues include E169, E203, and H206.

This sequence belongs to the ribonucleoside diphosphate reductase small chain family. In terms of assembly, homodimer and heterodimer with RNR2A. Heterotetramer of two R1 and two R2 chains. Interacts with CSN7 (via C-terminal tail). Fe cation is required as a cofactor. As to expression, expressed in roots, cauline and rosette leaves, stems and flowers.

Its subcellular location is the cytoplasm. It is found in the nucleus. The enzyme catalyses a 2'-deoxyribonucleoside 5'-diphosphate + [thioredoxin]-disulfide + H2O = a ribonucleoside 5'-diphosphate + [thioredoxin]-dithiol. Provides the precursors necessary for DNA synthesis. Catalyzes the biosynthesis of deoxyribonucleotides from the corresponding ribonucleotides. Involved in DNA damage repair and programmed cell death inhibition. The polypeptide is Ribonucleoside-diphosphate reductase small chain C (TSO2) (Arabidopsis thaliana (Mouse-ear cress)).